A 303-amino-acid chain; its full sequence is DDRGK domain-containing protein 1 (303 aa).

Residues 1–2 (MD) are Lumenal-facing. The chain crosses the membrane as a helical span at residues 3–23 (LILLIGIATALLIILLTLYFL). Residues 24–303 (QKRNAPAETK…TPVTASEGGA (280 aa)) are Cytoplasmic-facing. Disordered stretches follow at residues 31–53 (ETKA…VPRR) and 84–160 (AIDP…AEVE). Basic and acidic residues predominate over residues 106-160 (LDEKMGAKKRAKMEAKEQKRLQREQELHDREQRKVKEAKEEAERKQQDDLDAEVE).

The protein belongs to the DDRGK1 family. As to quaternary structure, interacts with Atg9; the interaction is transient.

The protein resides in the endoplasmic reticulum membrane. Its function is as follows. Substrate adapter for ufmylation, the covalent attachment of the ubiquitin-like modifier UFM1 to substrate proteins. Required for ufmylation of Atg9; protects the nervous system during aging, possibly by stabilizing Atg9 and supporting its function. This chain is DDRGK domain-containing protein 1, found in Drosophila grimshawi (Hawaiian fruit fly).